Consider the following 301-residue polypeptide: Small ribosomal subunit protein uS2 (301 aa).

The segment at 282–301 is disordered; sequence VRKQPVSENENVEAAAAEQK. A compositionally biased stretch (low complexity) spans 289–301; the sequence is ENENVEAAAAEQK.

This sequence belongs to the universal ribosomal protein uS2 family.

The sequence is that of Small ribosomal subunit protein uS2 from Koribacter versatilis (strain Ellin345).